The following is a 330-amino-acid chain: Fructose-1,6-bisphosphatase class 1 (330 aa).

Residues Glu84, Asp103, Leu105, and Asp106 each coordinate Mg(2+). Substrate is bound by residues 106-109 (DGSS), Asn196, and Lys262. Glu268 contributes to the Mg(2+) binding site.

It belongs to the FBPase class 1 family. As to quaternary structure, homotetramer. It depends on Mg(2+) as a cofactor.

It localises to the cytoplasm. It carries out the reaction beta-D-fructose 1,6-bisphosphate + H2O = beta-D-fructose 6-phosphate + phosphate. It functions in the pathway carbohydrate biosynthesis; gluconeogenesis. The chain is Fructose-1,6-bisphosphatase class 1 from Shewanella baltica (strain OS185).